We begin with the raw amino-acid sequence, 286 residues long: Diaminopimelate epimerase (286 aa).

N12 and N67 together coordinate substrate. The active-site Proton donor is C76. Residues 77–78 (GN), N165, N198, and 216–217 (ER) each bind substrate. C225 functions as the Proton acceptor in the catalytic mechanism. 226 to 227 (GT) serves as a coordination point for substrate.

The protein belongs to the diaminopimelate epimerase family. As to quaternary structure, homodimer.

The protein resides in the cytoplasm. The catalysed reaction is (2S,6S)-2,6-diaminopimelate = meso-2,6-diaminopimelate. Its pathway is amino-acid biosynthesis; L-lysine biosynthesis via DAP pathway; DL-2,6-diaminopimelate from LL-2,6-diaminopimelate: step 1/1. Functionally, catalyzes the stereoinversion of LL-2,6-diaminopimelate (L,L-DAP) to meso-diaminopimelate (meso-DAP), a precursor of L-lysine. This is Diaminopimelate epimerase from Methanothermobacter thermautotrophicus (strain ATCC 29096 / DSM 1053 / JCM 10044 / NBRC 100330 / Delta H) (Methanobacterium thermoautotrophicum).